The primary structure comprises 375 residues: MQSVTPTSQYLKALNEGSHQPDDVQKEAVSRLEIIYQELINSTPPAPRTSGLMARVGKLWGKREDTKHTPVRGLYMWGGVGRGKTWLMDLFYQSLPGERKQRLHFHRFMLRVHEELTALQGQTDPLEIIADRFKAETDVLCFDEFFVSDITDAMLLGGLMKALFARGITLVATSNIPPDELYRNGLQRARFLPAIDAIKQHCDVMNVDAGVDYRLRTLTQAHLWLSPLHDETRAQMDKLWLALAGGKRENSPTLEINHRPLATMGVENQTLAVSFTTLCVDARSQHDYIALSRLFHTVMLFDVPVMTRLMESEARRFIALVDEFYERHVKLVVSAEVPLYEIYQGDRLKFEFQRCLSRLQEMQSEEYLKREHLAG.

Gly78 to Thr85 is a binding site for ATP.

Belongs to the AFG1 ATPase family. ZapE subfamily. In terms of assembly, interacts with FtsZ.

The protein localises to the cytoplasm. In terms of biological role, reduces the stability of FtsZ polymers in the presence of ATP. The chain is Cell division protein ZapE from Escherichia coli O157:H7.